Reading from the N-terminus, the 107-residue chain is Ferredoxin 1 (107 aa).

4Fe-4S ferredoxin-type domains are found at residues 2–30 (TFVV…YEGP) and 31–60 (NFLV…SEDE). [3Fe-4S] cluster is bound by residues Cys-9 and Cys-17. Positions 21, 40, 43, and 46 each coordinate [4Fe-4S] cluster. Cys-50 is a [3Fe-4S] cluster binding site.

The cofactor is [4Fe-4S] cluster. [3Fe-4S] cluster serves as cofactor.

Ferredoxins are iron-sulfur proteins that transfer electrons in a wide variety of metabolic reactions. This chain is Ferredoxin 1 (fdxA), found in Pseudomonas aeruginosa (strain ATCC 15692 / DSM 22644 / CIP 104116 / JCM 14847 / LMG 12228 / 1C / PRS 101 / PAO1).